We begin with the raw amino-acid sequence, 192 residues long: Virion infectivity factor (192 aa).

Residues 14 to 17 (DRMR) form an interaction with host APOBEC3F; F1-box region. The interval 40–44 (YRHHY) is interaction with host APOBEC3G; G-box. Residues 54–72 (EVHIPLGEARLVVTTYWGL) are interaction with host APOBEC3F and APOBEC3G; FG-box. Residues 74-79 (TGEKEW) are interaction with host APOBEC3F; F2-box. The tract at residues 75–114 (GEKEWHLGQGVSIEWRKRRYSTQVDPGLADQLIHMYYFDC) is RNA-binding. Threonine 96 bears the Phosphothreonine; by host MAP4K1 mark. Histidine 108, cysteine 114, cysteine 133, and histidine 139 together coordinate Zn(2+). Residues 108–139 (HMYYFDCFAESAIRKAILGHIVSPSCEYQAGH) carry the HCCH motif motif. Serine 144 carries the post-translational modification Phosphoserine; by host. The BC-box-like motif signature appears at 144-153 (SLQYLALAAL). Residues 151–164 (AALIAPKKIKPPLP) form a multimerization region. Residues 151 to 180 (AALIAPKKIKPPLPSVRKLTEDRWNKPQKT) are SOCS box-like. Serine 165 carries the phosphoserine; by host MAP4K1 modification. Residues 165-192 (SVRKLTEDRWNKPQKTKGRRGSHTMNGH) are disordered. The interval 171 to 172 (ED) is membrane association. Residues 176 to 186 (KPQKTKGRRGS) show a composition bias toward basic residues. Threonine 188 bears the Phosphothreonine; by host mark.

Belongs to the primate lentivirus group Vif protein family. In terms of assembly, homomultimer; in vitro and presumably in vivo. Interacts with viral RNA and Pr55Gag precursor; these interactions mediate Vif incorporation into the virion. Interacts with the viral reverse transcriptase. Forms cullin-5-RING E3 ubiquitin-protein ligase complex (ECS complex) by interacting with host CUL5, RBX2, elongin BC complex (ELOB and ELOC) and CBFB/CBF-beta. Within the ECS complex, Vif interacts directly with host CUL5, ELOC and APOBEC (APOBEC3F and APOBEC3G) substrates. The ECS complex also contains some single-stranded RNA (ssRNA) that acts as a glue that bridges Vif with APOBEC (APOBEC3F and APOBEC3G) substrates. Interacts with host UBCE7IP1 isoform 3/ZIN and possibly with SAT. Interacts with host tyrosine kinases HCK and FYN; these interactions may decrease level of phosphorylated APOBEC3G incorporation into virions. Interacts with host ABCE1; this interaction may play a role in protecting viral RNA from damage during viral assembly. Interacts with host MDM2; this interaction targets Vif for degradation by the proteasome. Processed in virion by the viral protease. In terms of processing, highly phosphorylated on serine and threonine residues. Post-translationally, polyubiquitinated and degraded by the proteasome in the presence of APOBEC3G.

It is found in the host cytoplasm. The protein localises to the host cell membrane. Its subcellular location is the virion. Functionally, counteracts the innate antiviral activity of host APOBEC3F and APOBEC3G by promoting their ubiquitination and degradation. Acts as a substrate recognition component of an E3 ubiquitin-protein ligase complex: mechanistically, Vif hijacks a host cullin-5-RING E3 ubiquitin-protein ligase complex (ECS complex) and the transcription coactivator CBFB/CBF-beta to form an active E3 ubiquitin-protein ligase complex that targets APOBEC3G and APOBEC3F for polyubiquitination, leading to their degradation by the proteasome. Vif interaction with APOBEC3G also blocks its cytidine deaminase activity in a proteasome-independent manner, suggesting a dual inhibitory mechanism. May interact directly with APOBEC3G mRNA in order to inhibit its translation. Association with CBFB/CBF-beta also inhibits the transcription coactivator activity of CBFB/CBF-beta. Seems to play a role in viral morphology by affecting the stability of the viral nucleoprotein core. Finally, Vif also contributes to the G2 cell cycle arrest observed in HIV infected cells. The polypeptide is Virion infectivity factor (Human immunodeficiency virus type 1 group M subtype D (isolate NDK) (HIV-1)).